A 362-amino-acid polypeptide reads, in one-letter code: METRKIIHVDMDAFYASVEQRDFPEYKGKPLIVGGPPNSRSVVSAASYEARKFGVRSAMPCSKAAQLAPQAIFVFPRFEVYKEVSKQIREIFLEYTDLVEMLSLDEGYLDVTFNKKNIPFAVTIAKEIRTEIFKRTELTASAGVGNSKFISKLASEKNKPNGLTVVLPDDVISFIDPLPVSSFHGVGKVTARKMKELGIYTGKDLRTKSIDELVQHFGKMGIYYYKISRGEDERMVQSSRERKSLGAESTFDRDKLDYDDLLKQLKDVAVVVERRLEKKDFAGKTLTLKIKFYDFSLKTRSKTLSEPIFKADELYSTAIELFEEFFEIKYGKKSAIKAIRLLGISLSHPNSENEDPNLFLNL.

The UmuC domain occupies 6-187; that stretch reads IIHVDMDAFY…LPVSSFHGVG (182 aa). Aspartate 10 and aspartate 105 together coordinate Mg(2+). Glutamate 106 is a catalytic residue.

It belongs to the DNA polymerase type-Y family. Monomer. Mg(2+) is required as a cofactor.

The protein resides in the cytoplasm. It catalyses the reaction DNA(n) + a 2'-deoxyribonucleoside 5'-triphosphate = DNA(n+1) + diphosphate. In terms of biological role, poorly processive, error-prone DNA polymerase involved in untargeted mutagenesis. Copies undamaged DNA at stalled replication forks, which arise in vivo from mismatched or misaligned primer ends. These misaligned primers can be extended by PolIV. Exhibits no 3'-5' exonuclease (proofreading) activity. May be involved in translesional synthesis, in conjunction with the beta clamp from PolIII. The polypeptide is DNA polymerase IV (Leptospira interrogans serogroup Icterohaemorrhagiae serovar copenhageni (strain Fiocruz L1-130)).